A 31-amino-acid chain; its full sequence is Cytochrome b6-f complex subunit 6 (31 aa).

The helical transmembrane segment at isoleucine 4–glycine 24 threads the bilayer.

The protein belongs to the PetL family. The 4 large subunits of the cytochrome b6-f complex are cytochrome b6, subunit IV (17 kDa polypeptide, PetD), cytochrome f and the Rieske protein, while the 4 small subunits are PetG, PetL, PetM and PetN. The complex functions as a dimer.

The protein localises to the plastid. Its subcellular location is the chloroplast thylakoid membrane. Component of the cytochrome b6-f complex, which mediates electron transfer between photosystem II (PSII) and photosystem I (PSI), cyclic electron flow around PSI, and state transitions. PetL is important for photoautotrophic growth as well as for electron transfer efficiency and stability of the cytochrome b6-f complex. In Saccharum barberi (Indian sugarcane), this protein is Cytochrome b6-f complex subunit 6.